The sequence spans 285 residues: Probable endonuclease 4 (285 aa).

Zn(2+)-binding residues include H69, H109, E145, D179, H182, H216, D229, H231, and E261.

It belongs to the AP endonuclease 2 family. The cofactor is Zn(2+).

The catalysed reaction is Endonucleolytic cleavage to 5'-phosphooligonucleotide end-products.. Endonuclease IV plays a role in DNA repair. It cleaves phosphodiester bonds at apurinic or apyrimidinic (AP) sites, generating a 3'-hydroxyl group and a 5'-terminal sugar phosphate. The polypeptide is Probable endonuclease 4 (Salmonella newport (strain SL254)).